The chain runs to 385 residues: DNA replication and repair protein RecF (385 aa).

Glycine 30–threonine 37 provides a ligand contact to ATP.

This sequence belongs to the RecF family.

It localises to the cytoplasm. Functionally, the RecF protein is involved in DNA metabolism; it is required for DNA replication and normal SOS inducibility. RecF binds preferentially to single-stranded, linear DNA. It also seems to bind ATP. The protein is DNA replication and repair protein RecF of Mycobacterium leprae (strain Br4923).